We begin with the raw amino-acid sequence, 562 residues long: Dihydroxy-acid dehydratase (562 aa).

Asp80 lines the Mg(2+) pocket. Cys121 provides a ligand contact to [2Fe-2S] cluster. Mg(2+) contacts are provided by Asp122 and Lys123. Lys123 carries the N6-carboxylysine modification. Cys194 lines the [2Fe-2S] cluster pocket. Residue Glu446 coordinates Mg(2+). The Proton acceptor role is filled by Ser472.

It belongs to the IlvD/Edd family. Homodimer. [2Fe-2S] cluster is required as a cofactor. Mg(2+) serves as cofactor.

The catalysed reaction is (2R)-2,3-dihydroxy-3-methylbutanoate = 3-methyl-2-oxobutanoate + H2O. The enzyme catalyses (2R,3R)-2,3-dihydroxy-3-methylpentanoate = (S)-3-methyl-2-oxopentanoate + H2O. The protein operates within amino-acid biosynthesis; L-isoleucine biosynthesis; L-isoleucine from 2-oxobutanoate: step 3/4. Its pathway is amino-acid biosynthesis; L-valine biosynthesis; L-valine from pyruvate: step 3/4. Functionally, functions in the biosynthesis of branched-chain amino acids. Catalyzes the dehydration of (2R,3R)-2,3-dihydroxy-3-methylpentanoate (2,3-dihydroxy-3-methylvalerate) into 2-oxo-3-methylpentanoate (2-oxo-3-methylvalerate) and of (2R)-2,3-dihydroxy-3-methylbutanoate (2,3-dihydroxyisovalerate) into 2-oxo-3-methylbutanoate (2-oxoisovalerate), the penultimate precursor to L-isoleucine and L-valine, respectively. In Staphylococcus haemolyticus (strain JCSC1435), this protein is Dihydroxy-acid dehydratase.